Reading from the N-terminus, the 137-residue chain is Large ribosomal subunit protein uL16c (137 aa).

This sequence belongs to the universal ribosomal protein uL16 family. In terms of assembly, part of the 50S ribosomal subunit.

Its subcellular location is the plastid. The protein localises to the chloroplast. The polypeptide is Large ribosomal subunit protein uL16c (Bigelowiella natans (Pedinomonas minutissima)).